The primary structure comprises 207 residues: Large ribosomal subunit protein uL4 (207 aa).

The segment at 45-78 (RQGTHKTKNRAEVSGGGRKPWRQKGTGRARQGSI) is disordered.

It belongs to the universal ribosomal protein uL4 family. Part of the 50S ribosomal subunit.

Its function is as follows. One of the primary rRNA binding proteins, this protein initially binds near the 5'-end of the 23S rRNA. It is important during the early stages of 50S assembly. It makes multiple contacts with different domains of the 23S rRNA in the assembled 50S subunit and ribosome. Forms part of the polypeptide exit tunnel. The chain is Large ribosomal subunit protein uL4 from Geobacillus sp. (strain WCH70).